The chain runs to 501 residues: MNQAILQLSEIEKAFPGVKALDKASLNVYPGRVMALMGENGAGKSTLMKVLTGIYSRDAGEIVYQGQPAQFKGPRDSQQAGISIIHQELNLIRELTIAENIFLGREITSAFGRIDWPQMYAEADKLLARLKVKHSSKTLLGQLSLGEQQMVEIAKALSFESKVIIMDEPTDALTDTETEALFSVIRELREQGCGIVYISHRLKEIFEICDDITVLRDGKFIGQCEVVQTDEDGLIEMMVGRKLEEQYPRIDVVHGQTCLEVIGLTGSGVHDVSFTLKRGEILGISGLMGAGRTELMKVIYGALPSERGVINLDNRTINPVSPQDGLANGIAYISEDRKGDGLVLGLSVKENMSLCALDKLSKGVQIQHQDEVVAVDDFIQLFNIKTPSREQIIGNLSGGNQQKVAIAKGLMTKPKVLILDEPTRGVDVGAKKEIYQLINKFKAEGMSIILVSSEMPEVLGMSDRILVMHEGRITGEFEAKHADQEKLMACAVGKKVSEEAA.

ABC transporter domains follow at residues 6 to 242 and 253 to 495; these read LQLS…VGRK and VHGQ…VGKK. 38-45 contacts ATP; it reads GENGAGKS.

It belongs to the ABC transporter superfamily. Ribose importer (TC 3.A.1.2.1) family. As to quaternary structure, the complex is composed of an ATP-binding protein (RbsA), two transmembrane proteins (RbsC) and a solute-binding protein (RbsB).

It is found in the cell inner membrane. It carries out the reaction D-ribose(out) + ATP + H2O = D-ribose(in) + ADP + phosphate + H(+). Its function is as follows. Part of the ABC transporter complex RbsABC involved in ribose import. Responsible for energy coupling to the transport system. The polypeptide is Ribose import ATP-binding protein RbsA (Vibrio vulnificus (strain YJ016)).